Reading from the N-terminus, the 373-residue chain is Chaperone protein DnaJ (373 aa).

The region spanning Asp5–Gly70 is the J domain. The CR-type zinc finger occupies Gly134–Lys211. Cys147, Cys150, Cys163, Cys166, Cys185, Cys188, Cys199, and Cys202 together coordinate Zn(2+). CXXCXGXG motif repeat units lie at residues Cys147–Gly154, Cys163–Gly170, Cys185–Gly192, and Cys199–Gly206.

This sequence belongs to the DnaJ family. In terms of assembly, homodimer. It depends on Zn(2+) as a cofactor.

The protein localises to the cytoplasm. In terms of biological role, participates actively in the response to hyperosmotic and heat shock by preventing the aggregation of stress-denatured proteins and by disaggregating proteins, also in an autonomous, DnaK-independent fashion. Unfolded proteins bind initially to DnaJ; upon interaction with the DnaJ-bound protein, DnaK hydrolyzes its bound ATP, resulting in the formation of a stable complex. GrpE releases ADP from DnaK; ATP binding to DnaK triggers the release of the substrate protein, thus completing the reaction cycle. Several rounds of ATP-dependent interactions between DnaJ, DnaK and GrpE are required for fully efficient folding. Also involved, together with DnaK and GrpE, in the DNA replication of plasmids through activation of initiation proteins. The sequence is that of Chaperone protein DnaJ from Nitratiruptor sp. (strain SB155-2).